A 115-amino-acid polypeptide reads, in one-letter code: Large ribosomal subunit protein bL21 (115 aa).

It belongs to the bacterial ribosomal protein bL21 family. In terms of assembly, part of the 50S ribosomal subunit. Contacts protein L20.

In terms of biological role, this protein binds to 23S rRNA in the presence of protein L20. This chain is Large ribosomal subunit protein bL21, found in Coxiella burnetii (strain RSA 331 / Henzerling II).